Here is a 640-residue protein sequence, read N- to C-terminus: Probable potassium transport system protein Kup (640 aa).

Transmembrane regions (helical) follow at residues 26-46, 69-89, 117-137, 155-175, 186-206, 224-244, 265-285, 297-317, 355-375, 384-404, 415-435, and 437-457; these read IAGL…TSPL, ILSL…VLFI, AWVL…DGMI, PAFR…LFVI, IFGP…IAGI, FFAD…LAIT, WFLV…ALIL, LLVP…ATII, IYVP…VVGF, AYGI…FVVV, AGLF…ATTV, and ILAG…LLTT.

It belongs to the HAK/KUP transporter (TC 2.A.72) family.

It is found in the cell inner membrane. The catalysed reaction is K(+)(in) + H(+)(in) = K(+)(out) + H(+)(out). Its function is as follows. Transport of potassium into the cell. Likely operates as a K(+):H(+) symporter. This Aromatoleum aromaticum (strain DSM 19018 / LMG 30748 / EbN1) (Azoarcus sp. (strain EbN1)) protein is Probable potassium transport system protein Kup.